A 90-amino-acid chain; its full sequence is Defensin-like protein 193 (90 aa).

Residues M1–A27 form the signal peptide. 4 cysteine pairs are disulfide-bonded: C32–C86, C45–C69, C54–C81, and C58–C83.

It belongs to the DEFL family. Protease inhibitor I18 (RTI/MTI-2) subfamily.

The protein localises to the secreted. The polypeptide is Defensin-like protein 193 (ATTI2) (Arabidopsis thaliana (Mouse-ear cress)).